The sequence spans 448 residues: N-succinylarginine dihydrolase (448 aa).

Substrate contacts are provided by residues 19–28, asparagine 110, and 137–138; these read GGLSYGNVAS and HR. The active site involves glutamate 174. Arginine 214 is a substrate binding site. The active site involves histidine 250. Positions 252 and 365 each coordinate substrate. Catalysis depends on cysteine 371, which acts as the Nucleophile.

This sequence belongs to the succinylarginine dihydrolase family. In terms of assembly, homodimer.

It carries out the reaction N(2)-succinyl-L-arginine + 2 H2O + 2 H(+) = N(2)-succinyl-L-ornithine + 2 NH4(+) + CO2. The protein operates within amino-acid degradation; L-arginine degradation via AST pathway; L-glutamate and succinate from L-arginine: step 2/5. Catalyzes the hydrolysis of N(2)-succinylarginine into N(2)-succinylornithine, ammonia and CO(2). This chain is N-succinylarginine dihydrolase, found in Pseudomonas savastanoi pv. phaseolicola (strain 1448A / Race 6) (Pseudomonas syringae pv. phaseolicola (strain 1448A / Race 6)).